Consider the following 643-residue polypeptide: MARMLAVRVVAGLAAAAVAALLLEHYGLAGPTTPLPKPRGSQRPHPAPGSEANNIFWGLQISDIHLSRFQDPGRALALEKFCSETIDIIQPALVLATGDLTDAKTKEHLGSRQHEVEWQTYQRILKKTRVMEKTKWLDIKGNHDAYNIPSLESIANYYRKYSAVRKDGAFHHIHSTPFGNYSFISVDATQRPGPKRPYNFFGILDEKQMEELVEFSKKSSQSNQTIWFGHFTTSTIMSPSPGIRTVMGSATAYLCGHLHTLGGLMPVLHTRHFTGTLELEVGDWKDNRRYRIFAFDHDLFSFADVTFDKWPVVLITNPKSLLYSCAKHEPLERLFHSTHIRVLAFSLSPITSVTVKIDGGDIGQASHLSGPIFILKWNPRNYSNGTHTIEVFVQDSAGRSRTAHHIFSAQEDAHLTFDPLASFILLTDHYIVARVLFVLIVLIQLTTLITFRYLAYPELKEPLGFANMTTFSLHILSKINISYYSVLLLTLYTVLGPWFVGEIIDGKLGCCFSFGIFVDGHFLQGGLTFINGIIQLVFFNIPLMAYVCWSLLHRCFGHSFRSHLHQGKYWKIIPVYLLILLLYIWQVYSCYFLHVTYGSLAFTFSPLRTWLTLLTPVLIYRVWTLNSTELGIFMVQLKSHLSS.

The helical transmembrane segment at 9–29 (VVAGLAAAAVAALLLEHYGLA) threads the bilayer. Residue asparagine 180 is glycosylated (N-linked (GlcNAc...) asparagine). The next 4 membrane-spanning stretches (helical) occupy residues 431–451 (IVARVLFVLIVLIQLTTLITF), 484–504 (YSVLLLTLYTVLGPWFVGEII), 532–552 (GIIQLVFFNIPLMAYVCWSLL), and 572–592 (IIPVYLLILLLYIWQVYSCYF).

It is found in the membrane. This is Transmembrane protein 62 (Tmem62) from Mus musculus (Mouse).